We begin with the raw amino-acid sequence, 203 residues long: Pyridoxine/pyridoxamine 5'-phosphate oxidase (203 aa).

FMN contacts are provided by residues 50–55, 65–66, Lys-71, Lys-72, and Gln-94; these read RMVLLK and YT. Lys-55 is a substrate binding site. 3 residues coordinate substrate: Tyr-112, Arg-116, and Ser-120. FMN contacts are provided by residues 129–130 and Trp-174; that span reads QS. Residue 180–182 participates in substrate binding; it reads RLH. Position 184 (Arg-184) interacts with FMN.

The protein belongs to the pyridoxamine 5'-phosphate oxidase family. As to quaternary structure, homodimer. FMN serves as cofactor.

The catalysed reaction is pyridoxamine 5'-phosphate + O2 + H2O = pyridoxal 5'-phosphate + H2O2 + NH4(+). The enzyme catalyses pyridoxine 5'-phosphate + O2 = pyridoxal 5'-phosphate + H2O2. Its pathway is cofactor metabolism; pyridoxal 5'-phosphate salvage; pyridoxal 5'-phosphate from pyridoxamine 5'-phosphate: step 1/1. The protein operates within cofactor metabolism; pyridoxal 5'-phosphate salvage; pyridoxal 5'-phosphate from pyridoxine 5'-phosphate: step 1/1. In terms of biological role, catalyzes the oxidation of either pyridoxine 5'-phosphate (PNP) or pyridoxamine 5'-phosphate (PMP) into pyridoxal 5'-phosphate (PLP). The sequence is that of Pyridoxine/pyridoxamine 5'-phosphate oxidase from Brucella canis (strain ATCC 23365 / NCTC 10854 / RM-666).